A 451-amino-acid chain; its full sequence is UPF0210 protein lin0538 (451 aa).

It belongs to the UPF0210 family. As to quaternary structure, homodimer.

The chain is UPF0210 protein lin0538 from Listeria innocua serovar 6a (strain ATCC BAA-680 / CLIP 11262).